Consider the following 1597-residue polypeptide: Transmembrane protein 131-like (1597 aa).

A signal peptide spans 1-40 (MAGLRRPQSGAYRRTAAAVNLLLGVFQVLLSCCRPGGAQG). The Extracellular portion of the chain corresponds to 41–869 (QAFEPLPNVV…VVPGPSWEES (829 aa)). Residues Asn-343, Asn-593, Asn-709, and Asn-846 are each glycosylated (N-linked (GlcNAc...) asparagine). Positions 696–916 (DYGKVTSLIL…QNGSSSSQQN (221 aa)) are required for Wnt-signaling inhibition and LRP6 degradation. Residues 870–890 (FWRLTVFFVSLSLLGVILIAF) traverse the membrane as a helical segment. At 891 to 1597 (QQAQYILMEF…SRDSSYCGNM (707 aa)) the chain is on the cytoplasmic side. Positions 907–917 (QNGSSSSQQNG) are enriched in low complexity. Disordered regions lie at residues 907-928 (QNGS…SHPH), 1096-1240 (AELK…EQRL), and 1252-1322 (DGAG…SDCD). The segment covering 1213-1222 (RPCRRNKKRA) has biased composition (basic residues). Over residues 1223–1239 (SAQASSSPRPSEQSEQR) the composition is skewed to low complexity. A compositionally biased stretch (basic and acidic residues) spans 1269–1290 (PERREEDSYYQKSEKKCADKFC). A compositionally biased stretch (low complexity) spans 1291–1319 (SDSSSDCGSSSGSVRASRGSWGSWSSSSS).

It belongs to the TMEM131 family.

The protein resides in the cell membrane. It localises to the endoplasmic reticulum. It is found in the cytoplasm. In terms of biological role, in its membrane-associated form, antagonizes canonical Wnt signaling by triggering lysosome-dependent degradation of Wnt-activated LRP6. Regulates thymocyte proliferation. The protein is Transmembrane protein 131-like of Mus musculus (Mouse).